A 510-amino-acid polypeptide reads, in one-letter code: ATP synthase subunit alpha (510 aa).

170–177 contacts ATP; it reads GDRQTGKT.

It belongs to the ATPase alpha/beta chains family. F-type ATPases have 2 components, CF(1) - the catalytic core - and CF(0) - the membrane proton channel. CF(1) has five subunits: alpha(3), beta(3), gamma(1), delta(1), epsilon(1). CF(0) has three main subunits: a(1), b(2) and c(9-12). The alpha and beta chains form an alternating ring which encloses part of the gamma chain. CF(1) is attached to CF(0) by a central stalk formed by the gamma and epsilon chains, while a peripheral stalk is formed by the delta and b chains.

The protein localises to the cell inner membrane. It catalyses the reaction ATP + H2O + 4 H(+)(in) = ADP + phosphate + 5 H(+)(out). Its function is as follows. Produces ATP from ADP in the presence of a proton gradient across the membrane. The alpha chain is a regulatory subunit. This chain is ATP synthase subunit alpha, found in Caulobacter vibrioides (strain ATCC 19089 / CIP 103742 / CB 15) (Caulobacter crescentus).